The following is a 758-amino-acid chain: Actin filament-associated protein 1-like 1 (758 aa).

A disordered region spans residues 91–194 (YRDSSENLSC…YESYDEEDEE (104 aa)). The segment covering 102 to 120 (LPPPPSAPPPPLPTTPPPE) has biased composition (pro residues). The segment covering 137 to 148 (YITSRNSSSPPN) has biased composition (polar residues). Residues 177–186 (ESDGLSSSYE) are compositionally biased toward low complexity. The PH 1 domain occupies 216-312 (DSRICAFLLR…WLRVIKEVIS (97 aa)). The interval 335-369 (SHDKTSDSDSAANGENSSLSSGKENRDTGKCRKGG) is disordered. The segment covering 342–356 (SDSAANGENSSLSSG) has biased composition (polar residues). The PH 2 domain occupies 409–503 (EVPCCGYLSV…WLGLLLAQTG (95 aa)). The stretch at 602-690 (KTRAEEDARK…TEVKENLKKS (89 aa)) forms a coiled coil. The disordered stretch occupies residues 692–758 (AGGPTLGLAV…KAKEWEKKKP (67 aa)). Over residues 749–758 (KAKEWEKKKP) the composition is skewed to basic and acidic residues.

The protein localises to the cytoplasm. Its subcellular location is the cell projection. It is found in the podosome. It localises to the invadopodium. The protein resides in the cytoskeleton. The protein localises to the stress fiber. May be involved in podosome and invadosome formation. In Xenopus tropicalis (Western clawed frog), this protein is Actin filament-associated protein 1-like 1 (afap1l1).